A 63-amino-acid chain; its full sequence is Kappa-theraphotoxin-Cg3a 1 (63 aa).

The first 21 residues, 1–21 (MKNTSILFILGLALLLVLAFE), serve as a signal peptide directing secretion. Positions 22 to 29 (VQVGESDG) are excised as a propeptide. 3 disulfides stabilise this stretch: Cys-31–Cys-46, Cys-38–Cys-51, and Cys-45–Cys-58.

Belongs to the neurotoxin 10 (Hwtx-1) family. 44 (Jztx-4) subfamily. As to expression, expressed by the venom gland.

The protein resides in the secreted. Its function is as follows. Gating modifier of Kv2.1/KCNB1, Kv2.2/KCNB2 and Kv4.3/KCND3 channels. This chain is Kappa-theraphotoxin-Cg3a 1, found in Chilobrachys guangxiensis (Chinese earth tiger tarantula).